Here is a 251-residue protein sequence, read N- to C-terminus: tRNA (guanine-N(1)-)-methyltransferase (251 aa).

Residues glycine 111 and 131–136 (LGDFVL) contribute to the S-adenosyl-L-methionine site.

The protein belongs to the RNA methyltransferase TrmD family. As to quaternary structure, homodimer.

It is found in the cytoplasm. It carries out the reaction guanosine(37) in tRNA + S-adenosyl-L-methionine = N(1)-methylguanosine(37) in tRNA + S-adenosyl-L-homocysteine + H(+). Functionally, specifically methylates guanosine-37 in various tRNAs. This chain is tRNA (guanine-N(1)-)-methyltransferase, found in Synechococcus sp. (strain JA-2-3B'a(2-13)) (Cyanobacteria bacterium Yellowstone B-Prime).